Consider the following 489-residue polypeptide: Protein P7 (489 aa).

RNA-binding regions lie at residues 129 to 251 (TSLI…GRML) and 321 to 351 (AGDYGNNVIIIENPPHSDVRGLGVKYSFQVN).

It belongs to the phytoreovirus protein P7 family.

It is found in the virion. Its subcellular location is the host cytoplasm. Functionally, probable component of the transcriptional machinery present in the inner capsid. Displays dsRNA binding activity and may play an important role in the sorting of viral RNA and virion assembly. Together with the RNA-directed RNA polymerase P1 and capping enzyme P5, forms an transcriptional complex positioned near the channels situated at each of the five-fold vertices of the core. The protein is Protein P7 of Rice gall dwarf virus (RGDV).